The following is an 804-amino-acid chain: Leucine--tRNA ligase (804 aa).

Residues 39 to 50 carry the 'HIGH' region motif; the sequence is PFPSGKGLHVGH. The 'KMSKS' region signature appears at 573–577; it reads KMSKS. Lysine 576 provides a ligand contact to ATP.

This sequence belongs to the class-I aminoacyl-tRNA synthetase family.

The protein localises to the cytoplasm. It carries out the reaction tRNA(Leu) + L-leucine + ATP = L-leucyl-tRNA(Leu) + AMP + diphosphate. The protein is Leucine--tRNA ligase of Lactobacillus johnsonii (strain CNCM I-12250 / La1 / NCC 533).